We begin with the raw amino-acid sequence, 127 residues long: Fluoride-specific ion channel FluC 1 (127 aa).

3 helical membrane passes run 6 to 26 (PLVT…GSNL), 29 to 49 (FVGL…CGSF), and 95 to 115 (EWAV…VLVG).

This sequence belongs to the fluoride channel Fluc/FEX (TC 1.A.43) family.

Its subcellular location is the cell membrane. It catalyses the reaction fluoride(in) = fluoride(out). In terms of biological role, fluoride-specific ion channel. Important for reducing fluoride concentration in the cell, thus reducing its toxicity. The sequence is that of Fluoride-specific ion channel FluC 1 from Haloarcula marismortui (strain ATCC 43049 / DSM 3752 / JCM 8966 / VKM B-1809) (Halobacterium marismortui).